Consider the following 443-residue polypeptide: Transcription factor E2F2 (443 aa).

The tract at residues 1-22 is disordered; sequence MLRAPRTLAPATAQPTKSLPAL. Positions 67-107 are cyclin A/CDK2 binding; the sequence is ATPHGPEGQIVRCAPAGRLPAKRKLDLEGIGRPTVPEFRTP. A DNA-binding region spans residues 109–198; the sequence is GKCIRVDGLP…KNNIQWVGRE (90 aa). The segment at 157 to 178 is leucine-zipper; the sequence is LNWAAEVLDVQKRRIYDITNVL. The short motif at 162 to 198 is the DEF box element; it reads EVLDVQKRRIYDITNVLEGIQLIRKKSKNNIQWVGRE. The segment at 199-291 is dimerization; the sequence is LFEDPTRPSR…PDRAEENLQI (93 aa). Residues 306–341 form a disordered region; that stretch reads PEEGQEPDSPAKEALPSTSALSPIPDCAQPGCSTDS. Residues 361–443 are transactivation; the sequence is PPPPLPPAPS…SYDLGDLLIN (83 aa). Positions 416–433 are retinoblastoma protein binding; the sequence is DEYLWGMDEGEGISDLFD.

The protein belongs to the E2F/DP family. As to quaternary structure, component of the DRTF1/E2F transcription factor complex. Forms heterodimers with DP family members. The E2F2 complex binds specifically hypophosphorylated retinoblastoma protein RB1. During the cell cycle, RB1 becomes phosphorylated in mid-to-late G1 phase, detaches from the DRTF1/E2F complex, rendering E2F transcriptionally active. Viral oncoproteins, notably E1A, T-antigen and HPV E7, are capable of sequestering RB protein, thus releasing the active complex. Binds EAPP. In terms of processing, phosphorylated by CDK2 and cyclin A-CDK2 in the S-phase.

Its subcellular location is the nucleus. Functionally, transcription activator that binds DNA cooperatively with DP proteins through the E2 recognition site, 5'-TTTC[CG]CGC-3' found in the promoter region of a number of genes whose products are involved in cell cycle regulation or in DNA replication. The DRTF1/E2F complex functions in the control of cell-cycle progression from g1 to s phase. E2F2 binds specifically to RB1 in a cell-cycle dependent manner. This chain is Transcription factor E2F2 (E2f2), found in Mus musculus (Mouse).